A 366-amino-acid chain; its full sequence is Ribosomal RNA large subunit methyltransferase M (366 aa).

S-adenosyl-L-methionine contacts are provided by residues Ser188, 221–224 (CPGG), Asp240, Asp260, and Asp277. The active-site Proton acceptor is the Lys306.

This sequence belongs to the class I-like SAM-binding methyltransferase superfamily. RNA methyltransferase RlmE family. RlmM subfamily. As to quaternary structure, monomer.

It localises to the cytoplasm. It carries out the reaction cytidine(2498) in 23S rRNA + S-adenosyl-L-methionine = 2'-O-methylcytidine(2498) in 23S rRNA + S-adenosyl-L-homocysteine + H(+). Catalyzes the 2'-O-methylation at nucleotide C2498 in 23S rRNA. The protein is Ribosomal RNA large subunit methyltransferase M of Salmonella agona (strain SL483).